Reading from the N-terminus, the 517-residue chain is Putative alpha-L-fucosidase 1 (517 aa).

The N-terminal stretch at 1–20 (MATILLLLLGLLVGLPLLRA) is a signal peptide. Residues Asn-119, Asn-249, Asn-296, Asn-321, Asn-352, Asn-496, and Asn-511 are each glycosylated (N-linked (GlcNAc...) asparagine).

This sequence belongs to the glycosyl hydrolase 29 family.

It localises to the secreted. The protein localises to the extracellular space. Its subcellular location is the apoplast. The catalysed reaction is an alpha-L-fucoside + H2O = L-fucose + an alcohol. In terms of biological role, alpha-L-fucosidase is responsible for hydrolyzing the alpha-1,6-linked fucose joined to the reducing-end N-acetylglucosamine of the carbohydrate moieties of glycoproteins. Active only against 2'-fucosyl-lactitol when heterologously expressed. This is Putative alpha-L-fucosidase 1 from Oryza sativa subsp. japonica (Rice).